The primary structure comprises 624 residues: Chaperone protein HtpG (624 aa).

The a; substrate-binding stretch occupies residues 1–341; that stretch reads MAVKQFKAES…SPDLSLNISR (341 aa). The b stretch occupies residues 342–550; the sequence is ELLQHDRQLK…DGELSIEMEK (209 aa). Residues 551–624 are c; sequence VLKMMPDNNN…FANDVASLMK (74 aa).

Belongs to the heat shock protein 90 family. Homodimer.

It is found in the cytoplasm. Molecular chaperone. Has ATPase activity. This Clostridium acetobutylicum (strain ATCC 824 / DSM 792 / JCM 1419 / IAM 19013 / LMG 5710 / NBRC 13948 / NRRL B-527 / VKM B-1787 / 2291 / W) protein is Chaperone protein HtpG.